The chain runs to 137 residues: 2-iminobutanoate/2-iminopropanoate deaminase (137 aa).

The residue at position 2 (Ser-2) is an N-acetylserine. Lys-13, Lys-60, and Lys-67 each carry N6-succinyllysine. Thr-74 carries the post-translational modification Phosphothreonine. At Ser-136 the chain carries Phosphoserine.

This sequence belongs to the RutC family. In terms of assembly, homotrimer. Interacts with YTHDF2. Expressed predominantly in liver and kidney. Lower levels in lung and brain.

The protein localises to the cytoplasm. It localises to the nucleus. Its subcellular location is the peroxisome. The protein resides in the mitochondrion. The enzyme catalyses 2-iminobutanoate + H2O = 2-oxobutanoate + NH4(+). It carries out the reaction 2-iminopropanoate + H2O = pyruvate + NH4(+). Its function is as follows. Catalyzes the hydrolytic deamination of enamine/imine intermediates that form during the course of normal metabolism. May facilitate the release of ammonia from these potentially toxic reactive metabolites, reducing their impact on cellular components. It may act on enamine/imine intermediates formed by several types of pyridoxal-5'-phosphate-dependent dehydratases including L-threonine dehydratase. Functionally, also promotes endoribonucleolytic cleavage of some transcripts by promoting recruitment of the ribonuclease P/MRP complex. Acts by bridging YTHDF2 and the ribonuclease P/MRP complex. RIDA/HRSP12 binds to N6-methyladenosine (m6A)-containing mRNAs containing a 5'-GGUUC-3' motif: cooperative binding of RIDA/HRSP12 and YTHDF2 to such transcripts lead to recruitment of the ribonuclease P/MRP complex and subsequent endoribonucleolytic cleavage. The chain is 2-iminobutanoate/2-iminopropanoate deaminase from Homo sapiens (Human).